The sequence spans 501 residues: Glycerol kinase (501 aa).

ADP is bound at residue threonine 12. Residues threonine 12, threonine 13, and serine 14 each coordinate ATP. Threonine 12 lines the sn-glycerol 3-phosphate pocket. ADP is bound at residue arginine 16. Arginine 82, glutamate 83, tyrosine 135, and aspartate 244 together coordinate sn-glycerol 3-phosphate. Glycerol is bound by residues arginine 82, glutamate 83, tyrosine 135, aspartate 244, and glutamine 245. Residues threonine 266, glycine 309, glycine 409, and asparagine 413 each coordinate ADP. Residues threonine 266, glycine 309, and glycine 409 each coordinate ATP.

Belongs to the FGGY kinase family.

It carries out the reaction glycerol + ATP = sn-glycerol 3-phosphate + ADP + H(+). It participates in polyol metabolism; glycerol degradation via glycerol kinase pathway; sn-glycerol 3-phosphate from glycerol: step 1/1. With respect to regulation, inhibited by fructose 1,6-bisphosphate (FBP). Its function is as follows. Key enzyme in the regulation of glycerol uptake and metabolism. Catalyzes the phosphorylation of glycerol to yield sn-glycerol 3-phosphate. The protein is Glycerol kinase of Coxiella burnetii (strain RSA 331 / Henzerling II).